The sequence spans 956 residues: GAS2-like protein 2B (956 aa).

The Calponin-homology (CH) domain occupies 23–150 (YAMKEDLAEW…CLLELARRAS (128 aa)). Positions 191-263 (CDFKNLDQMV…HYLDKHDPCH (73 aa)) constitute a GAR domain. 2 stretches are compositionally biased toward polar residues: residues 332 to 353 (SSSY…QTPP) and 381 to 390 (DPQQLGNPQS). 4 disordered regions span residues 332–361 (SSSY…SMSI), 378–406 (DTQD…ASQL), 853–885 (RPKI…SRNN), and 914–956 (VNSE…ESWV). Positions 859-868 (RRDNRPEKKP) are enriched in basic and acidic residues.

The protein belongs to the GAS2 family.

It localises to the cytoplasm. It is found in the cytoskeleton. Its subcellular location is the cilium basal body. Its function is as follows. Together with gas2l2.L, regulates ciliary orientation and performance. The protein is GAS2-like protein 2B of Xenopus laevis (African clawed frog).